A 202-amino-acid polypeptide reads, in one-letter code: dITP/XTP pyrophosphatase (202 aa).

10 to 15 (TSNRHK) contributes to the substrate binding site. D70 acts as the Proton acceptor in catalysis. D70 is a binding site for Mg(2+). Substrate contacts are provided by residues S71, 153-156 (FGYD), K176, and 181-182 (HR).

It belongs to the HAM1 NTPase family. In terms of assembly, homodimer. The cofactor is Mg(2+).

It carries out the reaction XTP + H2O = XMP + diphosphate + H(+). It catalyses the reaction dITP + H2O = dIMP + diphosphate + H(+). The enzyme catalyses ITP + H2O = IMP + diphosphate + H(+). In terms of biological role, pyrophosphatase that catalyzes the hydrolysis of nucleoside triphosphates to their monophosphate derivatives, with a high preference for the non-canonical purine nucleotides XTP (xanthosine triphosphate), dITP (deoxyinosine triphosphate) and ITP. Seems to function as a house-cleaning enzyme that removes non-canonical purine nucleotides from the nucleotide pool, thus preventing their incorporation into DNA/RNA and avoiding chromosomal lesions. In Methylacidiphilum infernorum (isolate V4) (Methylokorus infernorum (strain V4)), this protein is dITP/XTP pyrophosphatase.